The sequence spans 402 residues: Protein DesVIII (402 aa).

It belongs to the cytochrome P450 family. As to quaternary structure, forms a complex with DesVII.

It functions in the pathway antibiotic biosynthesis. Its function is as follows. Involved in the biosynthesis of the macrolide antibiotics methymycin, neomethymycin, narbomycin, and pikromycin. DesVIII assists the folding of the DesVII polypeptide. However, unlike chaperones, it remains bound to DesVII during catalysis, forming a tight DesVII/DesVIII complex. Although the formation of the DesVII/DesVIII complex is essential for the catalytic activity, DesVIII is unlikely to be involved in catalysis directly. This chain is Protein DesVIII, found in Streptomyces venezuelae.